The sequence spans 156 residues: Small ribosomal subunit protein uS7 (156 aa).

Belongs to the universal ribosomal protein uS7 family. As to quaternary structure, part of the 30S ribosomal subunit. Contacts proteins S9 and S11.

Its function is as follows. One of the primary rRNA binding proteins, it binds directly to 16S rRNA where it nucleates assembly of the head domain of the 30S subunit. Is located at the subunit interface close to the decoding center, probably blocks exit of the E-site tRNA. The sequence is that of Small ribosomal subunit protein uS7 from Buchnera aphidicola subsp. Baizongia pistaciae (strain Bp).